Consider the following 1183-residue polypeptide: Formin-like protein (1183 aa).

Disordered stretches follow at residues 1–44 and 63–82; these read MGAV…SISS and QHVRQPSLRSRSQQPMPTTD. Over residues 23–36 the composition is skewed to basic residues; that stretch reads PHSHAHHHSMRNGH. Residues 63–79 show a composition bias toward polar residues; the sequence is QHVRQPSLRSRSQQPMP. In terms of domain architecture, GBD/FH3 spans 76-559; sequence QPMPTTDELD…HNEQELKKRD (484 aa). Serine 225 is subject to Phosphoserine. Polar residues predominate over residues 572–584; sequence LSRSLPRSASSGD. The interval 572–681 is disordered; the sequence is LSRSLPRSAS…PPVAGFMPAP (110 aa). Composition is skewed to pro residues over residues 605–614 and 622–640; these read LPPPPPPMPA and APPPPPPPAPPAPPPPPGF. Over residues 641–654 the composition is skewed to low complexity; the sequence is SPLGSPSGSLASTA. The region spanning 687-1088 is the FH2 domain; that stretch reads IKRKVPTKYK…AALAASKKEN (402 aa). Positions 1136-1169 constitute a DAD domain; it reads DEVYNGALEDILLGLKSEPYRRADAVRRSQRRRI.

This sequence belongs to the formin homology family. As to quaternary structure, self-associates. Interacts (via GBD/FH3 domain) with Cdc42; the interaction is stronger with the GTP bound form of Cdc42.

In terms of biological role, together with Cdc42, involved in establishment of planar cell polarity in the developing compound eye by contributing to ommatidial rotation. Together with DAAM and Cdc42, has a role in neuronal development of mushroom bodies. This is Formin-like protein from Drosophila melanogaster (Fruit fly).